Consider the following 429-residue polypeptide: Serine hydroxymethyltransferase (429 aa).

Residues Leu126 and 130-132 contribute to the (6S)-5,6,7,8-tetrahydrofolate site; that span reads GHL. Lys235 carries the N6-(pyridoxal phosphate)lysine modification. 359 to 361 provides a ligand contact to (6S)-5,6,7,8-tetrahydrofolate; that stretch reads SPF.

Belongs to the SHMT family. As to quaternary structure, homodimer. The cofactor is pyridoxal 5'-phosphate.

It is found in the cytoplasm. The enzyme catalyses (6R)-5,10-methylene-5,6,7,8-tetrahydrofolate + glycine + H2O = (6S)-5,6,7,8-tetrahydrofolate + L-serine. It functions in the pathway one-carbon metabolism; tetrahydrofolate interconversion. The protein operates within amino-acid biosynthesis; glycine biosynthesis; glycine from L-serine: step 1/1. Its function is as follows. Catalyzes the reversible interconversion of serine and glycine with tetrahydrofolate (THF) serving as the one-carbon carrier. This reaction serves as the major source of one-carbon groups required for the biosynthesis of purines, thymidylate, methionine, and other important biomolecules. Also exhibits THF-independent aldolase activity toward beta-hydroxyamino acids, producing glycine and aldehydes, via a retro-aldol mechanism. This chain is Serine hydroxymethyltransferase, found in Synechococcus sp. (strain WH7803).